Consider the following 469-residue polypeptide: UDP-N-acetylmuramoylalanine--D-glutamate ligase (469 aa).

Gly-121–Thr-127 provides a ligand contact to ATP.

This sequence belongs to the MurCDEF family.

It localises to the cytoplasm. The enzyme catalyses UDP-N-acetyl-alpha-D-muramoyl-L-alanine + D-glutamate + ATP = UDP-N-acetyl-alpha-D-muramoyl-L-alanyl-D-glutamate + ADP + phosphate + H(+). Its pathway is cell wall biogenesis; peptidoglycan biosynthesis. Functionally, cell wall formation. Catalyzes the addition of glutamate to the nucleotide precursor UDP-N-acetylmuramoyl-L-alanine (UMA). The sequence is that of UDP-N-acetylmuramoylalanine--D-glutamate ligase from Rhodopseudomonas palustris (strain ATCC BAA-98 / CGA009).